Reading from the N-terminus, the 447-residue chain is GTPase Der (447 aa).

EngA-type G domains follow at residues 3-167 and 181-354; these read PVIA…VQER and VKIA…AAAM. GTP contacts are provided by residues 9 to 16, 56 to 60, 119 to 122, 187 to 194, 234 to 238, and 299 to 302; these read GRPNVGKS, DTGGF, NKAE, DTAGL, and NKWD. A KH-like domain is found at 355 to 439; it reads IKLPTPQITR…PLRIEFRTNK (85 aa).

Belongs to the TRAFAC class TrmE-Era-EngA-EngB-Septin-like GTPase superfamily. EngA (Der) GTPase family. As to quaternary structure, associates with the 50S ribosomal subunit.

Functionally, GTPase that plays an essential role in the late steps of ribosome biogenesis. The protein is GTPase Der of Cupriavidus metallidurans (strain ATCC 43123 / DSM 2839 / NBRC 102507 / CH34) (Ralstonia metallidurans).